We begin with the raw amino-acid sequence, 322 residues long: Probable transposase for insertion sequence element ISA1214 (322 aa).

The protein belongs to the transposase 11 family.

In terms of biological role, involved in the transposition of the insertion sequence ISA1214. The protein is Probable transposase for insertion sequence element ISA1214 of Archaeoglobus fulgidus (strain ATCC 49558 / DSM 4304 / JCM 9628 / NBRC 100126 / VC-16).